The chain runs to 477 residues: Dihydrolipoyl dehydrogenase 3 (477 aa).

Residues 39–47 (EKGEYGGAC), K56, and A118 each bind FAD. An intrachain disulfide couples C47 to C52. NAD(+)-binding positions include 186 to 190 (GAGYI), E209, and 279 to 282 (AVGR). Positions 322 and 330 each coordinate FAD. The Proton acceptor role is filled by H454.

Belongs to the class-I pyridine nucleotide-disulfide oxidoreductase family. As to quaternary structure, homodimer. The cofactor is FAD.

It localises to the cytoplasm. The enzyme catalyses N(6)-[(R)-dihydrolipoyl]-L-lysyl-[protein] + NAD(+) = N(6)-[(R)-lipoyl]-L-lysyl-[protein] + NADH + H(+). The polypeptide is Dihydrolipoyl dehydrogenase 3 (lpdA3) (Haloarcula marismortui (strain ATCC 43049 / DSM 3752 / JCM 8966 / VKM B-1809) (Halobacterium marismortui)).